Reading from the N-terminus, the 110-residue chain is Early E3B 12.7 kDa protein (110 aa).

The N-terminal stretch at 1-16 (MKTALVLFFMLIPVWA) is a signal peptide. Residues 37–57 (YIGWVYGIMSGLVFVSSVVSL) traverse the membrane as a helical segment.

It belongs to the adenoviridae E3_14 family. Post-translationally, phosphorylated on serine; O-glycosylated, but not N-glycosylated.

Its subcellular location is the host membrane. Functionally, down-regulates the EGF receptor and prevents cytolysis by TNF. In Homo sapiens (Human), this protein is Early E3B 12.7 kDa protein.